The sequence spans 533 residues: Beta-glucosidase 10 (533 aa).

Residues 1-23 form the signal peptide; that stretch reads MAVAGAMVMSGGVLLLLLAFTCA. Gln-53 contacts a beta-D-glucoside. An N-linked (GlcNAc...) asparagine glycan is attached at Asn-122. A beta-D-glucoside contacts are provided by residues His-157 and 202–203; that span reads NE. The Proton donor role is filled by Glu-203. Cys-222 and Cys-230 form a disulfide bridge. Tyr-369 is an a beta-D-glucoside binding site. An N-linked (GlcNAc...) asparagine glycan is attached at Asn-384. A beta-D-glucoside is bound at residue Glu-440. Glu-440 serves as the catalytic Nucleophile. Asn-448 is a glycosylation site (N-linked (GlcNAc...) asparagine). Residues Trp-489, 496 to 497, and Phe-505 each bind a beta-D-glucoside; that span reads EW.

This sequence belongs to the glycosyl hydrolase 1 family.

The enzyme catalyses Hydrolysis of terminal, non-reducing beta-D-glucosyl residues with release of beta-D-glucose.. The polypeptide is Beta-glucosidase 10 (BGLU10) (Oryza sativa subsp. japonica (Rice)).